The sequence spans 486 residues: Cardiolipin synthase A (486 aa).

Transmembrane regions (helical) follow at residues Thr-3–Val-23 and Met-38–Leu-58. 2 PLD phosphodiesterase domains span residues Met-219–Arg-246 and Glu-399–Ser-426. Active-site residues include His-224, Lys-226, Asp-231, His-404, Lys-406, and Asp-411.

The protein belongs to the phospholipase D family. Cardiolipin synthase subfamily. ClsA sub-subfamily.

It localises to the cell inner membrane. The catalysed reaction is 2 a 1,2-diacyl-sn-glycero-3-phospho-(1'-sn-glycerol) = a cardiolipin + glycerol. Its function is as follows. Catalyzes the reversible phosphatidyl group transfer from one phosphatidylglycerol molecule to another to form cardiolipin (CL) (diphosphatidylglycerol) and glycerol. The protein is Cardiolipin synthase A of Erwinia tasmaniensis (strain DSM 17950 / CFBP 7177 / CIP 109463 / NCPPB 4357 / Et1/99).